The chain runs to 197 residues: Phosphoheptose isomerase (197 aa).

Residues 36–197 enclose the SIS domain; sequence LVHSLAQGGK…VDSLLLGVEE (162 aa). 51–53 lines the substrate pocket; the sequence is NGG. Zn(2+) is bound by residues His-60 and Glu-64. Substrate is bound by residues Glu-64, 93-94, 119-121, Ser-124, and Gln-174; these read ND and STS. Positions 174 and 182 each coordinate Zn(2+).

The protein belongs to the SIS family. GmhA subfamily. Homotetramer. Requires Zn(2+) as cofactor.

It is found in the cytoplasm. The enzyme catalyses 2 D-sedoheptulose 7-phosphate = D-glycero-alpha-D-manno-heptose 7-phosphate + D-glycero-beta-D-manno-heptose 7-phosphate. The protein operates within carbohydrate biosynthesis; D-glycero-D-manno-heptose 7-phosphate biosynthesis; D-glycero-alpha-D-manno-heptose 7-phosphate and D-glycero-beta-D-manno-heptose 7-phosphate from sedoheptulose 7-phosphate: step 1/1. Functionally, catalyzes the isomerization of sedoheptulose 7-phosphate in D-glycero-D-manno-heptose 7-phosphate. This Thiobacillus denitrificans (strain ATCC 25259 / T1) protein is Phosphoheptose isomerase.